The primary structure comprises 416 residues: Squamosa promoter-binding-like protein 8 (416 aa).

The segment at 11–53 is disordered; sequence SSCDDFGYNATPPPPPSLLPIMDQDGGGGSIQRDHHHHHNHQQ. The SBP-type zinc-finger motif lies at 182–260; the sequence is PPRCQAEGCK…ADHNRRRRKS (79 aa). Residues C185, C190, C207, H210, C227, C230, H234, and C246 each contribute to the Zn(2+) site. The Bipartite nuclear localization signal signature appears at 243-259; sequence KKSCRKRLADHNRRRRK. The disordered stretch occupies residues 250 to 299; the sequence is LADHNRRRRKSKPSDGEHSGEKRRAQANKSAATKDKAGSSSKNAGIGDGF. The span at 261–273 shows a compositional bias: basic and acidic residues; sequence KPSDGEHSGEKRR.

In terms of tissue distribution, expressed in stems, leaf sheaths, and young panicles.

It localises to the nucleus. Its function is as follows. Probable transcription factor that plays an important role in building the laminar joint between leaf blade and leaf sheath boundary, thereby controlling ligule and auricle development. This chain is Squamosa promoter-binding-like protein 8 (SPL8), found in Oryza sativa subsp. indica (Rice).